Reading from the N-terminus, the 139-residue chain is Basic phospholipase A2 beta-bungarotoxin A2 chain (139 aa).

An N-terminal signal peptide occupies residues 1–9; that stretch reads AVCVSLLGA. The propeptide occupies 10–17; sequence ANIPPHPF. Tyrosine 45, glycine 47, and glycine 49 together coordinate Ca(2+). A disulfide bridge connects residues cysteine 46 and cysteine 62. Histidine 65 is an active-site residue. Aspartate 66 is a binding site for Ca(2+).

It belongs to the phospholipase A2 family. Group I subfamily. D49 sub-subfamily. As to quaternary structure, heterodimer; disulfide-linked. The A chains have phospholipase A2 activity and the B chains show homology with the basic protease inhibitors. Ca(2+) serves as cofactor. As to expression, expressed by the venom gland.

It is found in the secreted. It catalyses the reaction a 1,2-diacyl-sn-glycero-3-phosphocholine + H2O = a 1-acyl-sn-glycero-3-phosphocholine + a fatty acid + H(+). Its function is as follows. Snake venom phospholipase A2 (PLA2) that shows presynaptic neurotoxicity. PLA2 catalyzes the calcium-dependent hydrolysis of the 2-acyl groups in 3-sn-phosphoglycerides. The polypeptide is Basic phospholipase A2 beta-bungarotoxin A2 chain (Bungarus candidus (Malayan krait)).